A 636-amino-acid chain; its full sequence is Sodium-dependent multivitamin transporter (636 aa).

The next 12 membrane-spanning stretches (helical) occupy residues 24 to 44 (FSLVDYVVFSLLLVFSLAIGL), 68 to 88 (CLPVALSLLATFQSAVAILGV), 101 to 121 (FLGCCYFLGLLIPAHVFIPVF), 143 to 163 (ICGTVTFIFQMVIYMGVVLYA), 176 to 196 (LWLSVLTLGIVCTIYTALGGL), 199 to 219 (VIWTDVFQTLVMFLGQLAVII), 256 to 276 (FWTLAFGGVFMMLSLYGVNQA), 297 to 317 (VFPCQQVALSMGCLIGLVMFA), 336 to 356 (FVLYFVMDLLKGLPGLPGLFV), 404 to 424 (FGYGLLCLGMAYISSQMGPVL), 428 to 448 (ISIFGMVGGPLLGLFCLGMFF), and 456 to 476 (AIVGLLAGLIMAFWIGIGSIV). Residues Asn-489 and Asn-498 are each glycosylated (N-linked (GlcNAc...) asparagine). A helical membrane pass occupies residues 528–548 (LWYSAHNSTTVIVVGLIVSLL). The disordered stretch occupies residues 606–627 (LRASGDKEPMTEASPVHQGTSP).

Belongs to the sodium:solute symporter (SSF) (TC 2.A.21) family. As to quaternary structure, interacts with PDZD11.

The protein resides in the cell membrane. The protein localises to the apical cell membrane. It carries out the reaction biotin(out) + 2 Na(+)(out) = biotin(in) + 2 Na(+)(in). The catalysed reaction is (R)-pantothenate(out) + 2 Na(+)(out) = (R)-pantothenate(in) + 2 Na(+)(in). It catalyses the reaction (R)-lipoate(out) + 2 Na(+)(out) = (R)-lipoate(in) + 2 Na(+)(in). The enzyme catalyses iodide(out) + 2 Na(+)(out) = iodide(in) + 2 Na(+)(in). In terms of biological role, sodium-dependent multivitamin transporter that mediates the electrogenic transport of pantothenate, biotin, lipoate and iodide. Functions as a Na(+)-coupled substrate symporter where the stoichiometry of Na(+):substrate is 2:1, creating an electrochemical Na(+) gradient used as driving force for substrate uptake. Required for biotin and pantothenate uptake in the intestine across the brush border membrane. Plays a role in the maintenance of intestinal mucosa integrity, by providing the gut mucosa with biotin. Contributes to the luminal uptake of biotin and pantothenate into the brain across the blood-brain barrier. The polypeptide is Sodium-dependent multivitamin transporter (SLC5A6) (Oryctolagus cuniculus (Rabbit)).